A 116-amino-acid polypeptide reads, in one-letter code: Ino eighty subunit 4 (116 aa).

Residues 1–15 are compositionally biased toward low complexity; that stretch reads MSQESSVLSESQEQL. 2 disordered regions span residues 1 to 40 and 70 to 116; these read MSQESSVLSESQEQLANNPKIEDTSPPSANSRDNSKPVLP and EERQ…GLDS. Over residues 84 to 108 the composition is skewed to basic and acidic residues; that stretch reads KGSDDKATRKKEPADEDPEVKQLEK.

Component of the chromatin-remodeling INO80 complex, at least composed of ARP4, ARP5, ARP8, RVB1, RVB2, TAF14, NHP10, IES1, IES3, IES4, IES6, ACT1, IES2, IES5 and INO80.

The protein localises to the nucleus. The protein is Ino eighty subunit 4 (IES4) of Saccharomyces cerevisiae (strain ATCC 204508 / S288c) (Baker's yeast).